The chain runs to 679 residues: Glycine--tRNA ligase beta subunit (679 aa).

It belongs to the class-II aminoacyl-tRNA synthetase family. As to quaternary structure, tetramer of two alpha and two beta subunits.

The protein localises to the cytoplasm. It catalyses the reaction tRNA(Gly) + glycine + ATP = glycyl-tRNA(Gly) + AMP + diphosphate. This chain is Glycine--tRNA ligase beta subunit, found in Streptococcus pyogenes serotype M1.